Reading from the N-terminus, the 234-residue chain is uncharacterized protein (234 aa).

The chain crosses the membrane as a helical span at residues 13-32; the sequence is KSINYYIFFFQYTLVYNTIQ. Disordered stretches follow at residues 102 to 130 and 159 to 185; these read HSKT…SSNS and ESDS…SEYE. A compositionally biased stretch (low complexity) spans 103-130; it reads SKTTSLPFSSSSPQSSSSSSSSSSSSNS. Positions 167-185 are enriched in acidic residues; that stretch reads EFDSESNSDFDSESESEYE.

It is found in the membrane. This is an uncharacterized protein from Dictyostelium discoideum (Social amoeba).